Here is a 165-residue protein sequence, read N- to C-terminus: UPF0303 protein BamMC406_1480 (165 aa).

This sequence belongs to the UPF0303 family.

This is UPF0303 protein BamMC406_1480 from Burkholderia ambifaria (strain MC40-6).